Consider the following 853-residue polypeptide: DNA mismatch repair protein MutS (853 aa).

613 to 620 (GPNMGGKS) provides a ligand contact to ATP.

It belongs to the DNA mismatch repair MutS family.

In terms of biological role, this protein is involved in the repair of mismatches in DNA. It is possible that it carries out the mismatch recognition step. This protein has a weak ATPase activity. This is DNA mismatch repair protein MutS from Vibrio vulnificus (strain YJ016).